The following is a 178-amino-acid chain: Protein RICE FLOWERING LOCUS T 1 (178 aa).

The protein belongs to the phosphatidylethanolamine-binding protein family. Interacts with FTIP1. Expressed in leaf vascular tissues. Specifically expressed in the phloem including companion cells.

The protein localises to the cytoplasm. Its subcellular location is the nucleus. It localises to the endoplasmic reticulum. Its function is as follows. Probable mobile flower-promoting signal (florigen) that moves from the leaf to the shoot apical meristem (SAM) and induces flowering. Promotes the transition from vegetative growth to flowering under long day (LD) conditions. Acts upstream of MADS14 and MADS15. May also participate in the promotion of flowering under short day (SD) conditions. This chain is Protein RICE FLOWERING LOCUS T 1, found in Oryza sativa subsp. japonica (Rice).